Reading from the N-terminus, the 134-residue chain is uncharacterized protein (134 aa).

The protein to E.coli YbcV and YdfO.

This is an uncharacterized protein from Escherichia coli (strain K12).